Here is a 161-residue protein sequence, read N- to C-terminus: MALDATFYALVGLILFFVLIAYLKVPGMVGKALDARADKISNELAEAKRLREEAQSLVAEYQRKRKDAEAEAASIVAAAQREAEMLTAEAKQKTEEYVARRTALSEQKIKQAESDAINAVRAAAVDLAISAAEKVLASKADAGAQETLFKKAIGEVKARLN.

Residues 3–23 (LDATFYALVGLILFFVLIAYL) traverse the membrane as a helical segment.

This sequence belongs to the ATPase B chain family. F-type ATPases have 2 components, F(1) - the catalytic core - and F(0) - the membrane proton channel. F(1) has five subunits: alpha(3), beta(3), gamma(1), delta(1), epsilon(1). F(0) has three main subunits: a(1), b(2) and c(10-14). The alpha and beta chains form an alternating ring which encloses part of the gamma chain. F(1) is attached to F(0) by a central stalk formed by the gamma and epsilon chains, while a peripheral stalk is formed by the delta and b chains.

It localises to the cell inner membrane. Its function is as follows. F(1)F(0) ATP synthase produces ATP from ADP in the presence of a proton or sodium gradient. F-type ATPases consist of two structural domains, F(1) containing the extramembraneous catalytic core and F(0) containing the membrane proton channel, linked together by a central stalk and a peripheral stalk. During catalysis, ATP synthesis in the catalytic domain of F(1) is coupled via a rotary mechanism of the central stalk subunits to proton translocation. Functionally, component of the F(0) channel, it forms part of the peripheral stalk, linking F(1) to F(0). This chain is ATP synthase subunit b 1, found in Rhizobium meliloti (strain 1021) (Ensifer meliloti).